Consider the following 56-residue polypeptide: MATKGGREKIKLESTAGTGHFYTTSKNKKTMPEKMLIKKFDPKARKHVDYKEMKLK.

Over residues 1–12 the composition is skewed to basic and acidic residues; it reads MATKGGREKIKL. Residues 1–28 are disordered; sequence MATKGGREKIKLESTAGTGHFYTTSKNK. A compositionally biased stretch (polar residues) spans 15-25; it reads TAGTGHFYTTS.

It belongs to the bacterial ribosomal protein bL33 family.

The polypeptide is Large ribosomal subunit protein bL33 (Albidiferax ferrireducens (strain ATCC BAA-621 / DSM 15236 / T118) (Rhodoferax ferrireducens)).